The primary structure comprises 493 residues: Dipeptide permease D (493 aa).

Residues 1–13 lie on the Cytoplasmic side of the membrane; sequence MNKHASQPRAIYY. A helical membrane pass occupies residues 14-34; sequence VVALQIWEYFSFYGMRALLIL. The Periplasmic portion of the chain corresponds to 35-48; that stretch reads YLTNQLKYNDTHAY. Residues 49-69 form a helical membrane-spanning segment; the sequence is ELFSAYCSLVYVTPILGGFLA. Residues 70-77 lie on the Cytoplasmic side of the membrane; the sequence is DKVLGNRM. The chain crosses the membrane as a helical span at residues 78–98; it reads AVMLGALLMAIGHVVLGASEI. Residues 99–100 lie on the Periplasmic side of the membrane; the sequence is HP. Residues 101 to 121 form a helical membrane-spanning segment; the sequence is SFLYLSLAIIVCGYGLFKSNV. At 122–137 the chain is on the cytoplasmic side; sequence SCLLGELYEPTDPRRD. The chain crosses the membrane as a helical span at residues 138 to 158; the sequence is GGFSLMYAAGNVGSIIAPIAC. At 159–166 the chain is on the periplasmic side; the sequence is GYAQEEYS. A helical transmembrane segment spans residues 167 to 187; sequence WAMGFGLAAVGMIAGLVIFLC. The Cytoplasmic portion of the chain corresponds to 188–211; it reads GNRHFTHTRGVNKKVLRATNFLLP. Residues 212–232 traverse the membrane as a helical segment; it reads NWGWLLVLLVATPALITILFW. The Periplasmic segment spans residues 233 to 234; sequence KE. The helical transmembrane segment at 235-255 threads the bilayer; the sequence is WSVYALIVATIIGLGVLAKIY. The Cytoplasmic segment spans residues 256–266; it reads RKAENQKQRKE. A helical transmembrane segment spans residues 267-287; sequence LGLIVTLTFFSMLFWAFAQQG. The Periplasmic segment spans residues 288 to 311; it reads GSSISLYIDRFVNRDMFGYTVPTA. A helical transmembrane segment spans residues 312 to 332; the sequence is MFQSINAFAVMLCGVFLAWVV. The Cytoplasmic segment spans residues 333 to 343; it reads KESVAGNRTVR. Residues 344 to 364 form a helical membrane-spanning segment; that stretch reads IWGKFALGLGLMSAGFCILTL. The Periplasmic portion of the chain corresponds to 365–378; that stretch reads SARWSAMYGHSSLP. Residues 379–399 form a helical membrane-spanning segment; that stretch reads LMVLGLAVMGFAELFIDPVAM. The Cytoplasmic portion of the chain corresponds to 400-412; sequence SQITRIEIPGVTG. A helical transmembrane segment spans residues 413 to 433; it reads VLTGIYMLLSGAIANYLAGVI. Over 434 to 461 the chain is Periplasmic; that stretch reads ADQTSQASFDASGAINYSINAYIEVFDQ. The chain crosses the membrane as a helical span at residues 462 to 482; it reads ITWGALACVGLVLMIWLYQAL. The Cytoplasmic portion of the chain corresponds to 483–493; it reads KFRNRALALES.

It belongs to the major facilitator superfamily. Proton-dependent oligopeptide transporter (POT/PTR) (TC 2.A.17) family. DtpD subfamily.

It is found in the cell inner membrane. Its function is as follows. Probable proton-dependent permease that transports dipeptides. The chain is Dipeptide permease D (dtpD) from Escherichia coli (strain K12).